Here is a 281-residue protein sequence, read N- to C-terminus: Transcription factor E2F6 (281 aa).

A Glycyl lysine isopeptide (Lys-Gly) (interchain with G-Cter in SUMO2) cross-link involves residue Lys-9. A DNA-binding region spans residues 50–129; sequence YVSMRKALKV…SKNHIRWIGS (80 aa). The DEF box motif lies at 95-129; it reads KLGVRKRRVYDITNVLDGIDLVEKKSKNHIRWIGS. A dimerization region spans residues 130–222; that stretch reads DLSNFGAVPQ…PAPREDSITV (93 aa). Residues 143 to 164 form a leucine-zipper region; the sequence is LQEELSDLSAMEDALDELIKDC. The segment at 173–281 is transcription repression; it reads DDKENERLAY…QSEELLEVSN (109 aa). Positions 241 to 281 are disordered; it reads GQTSNKRSEGVGTSSSESTHPEGPEEEENPQQSEELLEVSN.

This sequence belongs to the E2F/DP family. In terms of assembly, forms heterodimers with DP family members TFDP1 or TFDP2. Component of the DRTF1/E2F transcription factor complex. Part of the E2F6.com-1 complex in G0 phase composed of E2F6, MGA, MAX, TFDP1, CBX3, BAT8, EUHMTASE1, RING1, RNF2, MBLR, L3MBTL2 and YAF2. Component of some MLL1/MLL complex, at least composed of the core components KMT2A/MLL1, ASH2L, HCFC1/HCF1, WDR5 and RBBP5, as well as the facultative components BACC1, CHD8, E2F6, HSP70, INO80C, KANSL1, LAS1L, MAX, MCRS1, MGA, KAT8/MOF, PELP1, PHF20, PRP31, RING2, RUVB1/TIP49A, RUVB2/TIP49B, SENP3, TAF1, TAF4, TAF6, TAF7, TAF9 and TEX10. In terms of tissue distribution, expressed in all tissues examined. Highest levels in placenta, skeletal muscle, heart, ovary, kidney, small intestine and spleen.

The protein resides in the nucleus. In terms of biological role, inhibitor of E2F-dependent transcription. Binds DNA cooperatively with DP proteins through the E2 recognition site, 5'-TTTC[CG]CGC-3'. Has a preference for the 5'-TTTCCCGC-3' E2F recognition site. E2F6 lacks the transcriptional activation and pocket protein binding domains. Appears to regulate a subset of E2F-dependent genes whose products are required for entry into the cell cycle but not for normal cell cycle progression. Represses expression of some meiosis-specific genes, including SLC25A31/ANT4. May silence expression via the recruitment of a chromatin remodeling complex containing histone H3-K9 methyltransferase activity. Overexpression delays the exit of cells from the S-phase. The sequence is that of Transcription factor E2F6 from Homo sapiens (Human).